A 465-amino-acid polypeptide reads, in one-letter code: Lysosomal dipeptide transporter MFSD1 (465 aa).

The interval 1 to 23 (MEEEDEEARALLAGGPDEADRGA) is disordered. A Dileucine internalization motif motif is present at residues 11-12 (LL). A run of 12 helical transmembrane segments spans residues 39 to 59 (LAHR…SYFC), 83 to 103 (LLYA…GFLI), 113 to 133 (TIIF…GGIF), 135 to 155 (AFWL…SLAV), 170 to 191 (LNLV…NMNL), 213 to 233 (ITLM…LALA), 266 to 286 (LWLI…FIGL), 303 to 323 (SAIN…FGLL), 331 to 351 (IIWV…LAFT), 361 to 381 (LLGL…AFVV), 392 to 412 (FMQS…GMIL), and 418 to 438 (LFLE…VVLL).

The protein belongs to the major facilitator superfamily. Homodimer. Interacts with lysosomal protein GLMP (via lumenal domain); the interaction starts while both proteins are still in the endoplasmic reticulum and is required for stabilization of MFSD1 in lysosomes but has no direct effect on its targeting to lysosomes or transporter activity.

The protein resides in the lysosome membrane. It carries out the reaction L-alpha-aminoacyl-L-arginine(out) = L-alpha-aminoacyl-L-arginine(in). The catalysed reaction is L-arginyl-L-alpha-amino acid(out) = L-arginyl-L-alpha-amino acid(in). The enzyme catalyses L-arginyl-glycine(out) = L-arginyl-glycine(in). It catalyses the reaction L-alpha-aminoacyl-L-lysine(out) = L-alpha-aminoacyl-L-lysine(in). It carries out the reaction L-aspartyl-L-lysine(out) = L-aspartyl-L-lysine(in). The catalysed reaction is L-alanyl-L-lysine(out) = L-alanyl-L-lysine(in). The enzyme catalyses L-lysyl-L-alpha-amino acid(out) = L-lysyl-L-alpha-amino acid(in). It catalyses the reaction L-lysyl-L-alanine(out) = L-lysyl-L-alanine(in). It carries out the reaction L-lysyl-L-lysine(out) = L-lysyl-L-lysine(in). The catalysed reaction is L-lysyl-glycine(out) = L-lysyl-glycine(in). The enzyme catalyses L-alpha-aminoacyl-L-histidine(out) = L-alpha-aminoacyl-L-histidine(in). It catalyses the reaction L-histidyl-L-alpha-amino acid(out) = L-histidyl-L-alpha-amino acid(in). It carries out the reaction L-histidyl-glycine(out) = L-histidyl-glycine(in). In terms of biological role, lysosomal dipeptide uniporter that selectively exports lysine, arginine or histidine-containing dipeptides with a net positive charge from the lysosome lumen into the cytosol. Could play a role in a specific type of protein O-glycosylation indirectly regulating macrophages migration and tissue invasion. Also essential for liver homeostasis. In Homo sapiens (Human), this protein is Lysosomal dipeptide transporter MFSD1.